The following is a 357-amino-acid chain: Protein phosphatase 1 regulatory subunit 42 (357 aa).

LRR repeat units follow at residues 29 to 50, 51 to 72, 73 to 94, 95 to 116, 117 to 138, 147 to 168, and 169 to 190; these read KITH…SLCK, NLSV…NYAT, NLTH…RSLK, KLEK…EGLG, ELRE…LFDP, SLSI…EILE, and NLNQ…EFLL. One can recognise an LRRCT domain in the interval 204–242; it reads NPVCLKPKYRDRLILVSKSLEFLDGKEIKNIERQFLMNW.

As to quaternary structure, interacts with PPP1CC isoform gamma-2; the interaction is direct. Interacts with actin, dynein, KIF5B, KIFC1 and tubulin. Associates with microtubules. Post-translationally, phosphorylated; in the testis.

The protein resides in the cytoplasm. It localises to the cytoskeleton. The protein localises to the microtubule organizing center. It is found in the centrosome. Regulates phosphatase activity of protein phosphatase 1 (PP1) complexes in the testis. In Macaca fascicularis (Crab-eating macaque), this protein is Protein phosphatase 1 regulatory subunit 42 (PPP1R42).